Reading from the N-terminus, the 712-residue chain is Eukaryotic translation initiation factor 3 subunit B (712 aa).

Met-1 is modified (N-acetylmethionine). Positions 56–143 (NIIVVDHLPV…HIFAVNMFDD (88 aa)) constitute an RRM domain.

It belongs to the eIF-3 subunit B family. In terms of assembly, component of the eukaryotic translation initiation factor 3 (eIF-3) complex, which is composed of at least 13 different subunits. Binds to the translation initiation factor TIF3H1.

The protein resides in the cytoplasm. Its function is as follows. RNA-binding component of the eukaryotic translation initiation factor 3 (eIF-3) complex, which is involved in protein synthesis of a specialized repertoire of mRNAs and, together with other initiation factors, stimulates binding of mRNA and methionyl-tRNAi to the 40S ribosome. The eIF-3 complex specifically targets and initiates translation of a subset of mRNAs involved in cell proliferation. This is Eukaryotic translation initiation factor 3 subunit B (TIF3B1) from Arabidopsis thaliana (Mouse-ear cress).